A 274-amino-acid polypeptide reads, in one-letter code: tRNA-cytidine(32) 2-sulfurtransferase (274 aa).

The PP-loop motif signature appears at 40-45; the sequence is SGGKDS. Residues Cys-115, Cys-118, and Cys-206 each contribute to the [4Fe-4S] cluster site.

It belongs to the TtcA family. Homodimer. Requires Mg(2+) as cofactor. [4Fe-4S] cluster is required as a cofactor.

The protein resides in the cytoplasm. It catalyses the reaction cytidine(32) in tRNA + S-sulfanyl-L-cysteinyl-[cysteine desulfurase] + AH2 + ATP = 2-thiocytidine(32) in tRNA + L-cysteinyl-[cysteine desulfurase] + A + AMP + diphosphate + H(+). It participates in tRNA modification. Functionally, catalyzes the ATP-dependent 2-thiolation of cytidine in position 32 of tRNA, to form 2-thiocytidine (s(2)C32). The sulfur atoms are provided by the cysteine/cysteine desulfurase (IscS) system. In Pseudomonas fluorescens (strain ATCC BAA-477 / NRRL B-23932 / Pf-5), this protein is tRNA-cytidine(32) 2-sulfurtransferase.